The chain runs to 513 residues: Histidine ammonia-lyase (513 aa).

Residues 142–144 constitute a cross-link (5-imidazolinone (Ala-Gly)); sequence ASG. 2,3-didehydroalanine (Ser) is present on serine 143.

It belongs to the PAL/histidase family. Post-translationally, contains an active site 4-methylidene-imidazol-5-one (MIO), which is formed autocatalytically by cyclization and dehydration of residues Ala-Ser-Gly.

The protein resides in the cytoplasm. The enzyme catalyses L-histidine = trans-urocanate + NH4(+). Its pathway is amino-acid degradation; L-histidine degradation into L-glutamate; N-formimidoyl-L-glutamate from L-histidine: step 1/3. The sequence is that of Histidine ammonia-lyase from Methylobacterium sp. (strain 4-46).